Consider the following 410-residue polypeptide: Phosphoglycerate kinase (410 aa).

Residues 19–21, Arg-34, 57–60, Arg-114, and Arg-154 contribute to the substrate site; these read DLN and HQGK. ATP-binding positions include Glu-332 and 358 to 361; that span reads GGHS.

It belongs to the phosphoglycerate kinase family. As to quaternary structure, homodimer.

The protein localises to the cytoplasm. It carries out the reaction (2R)-3-phosphoglycerate + ATP = (2R)-3-phospho-glyceroyl phosphate + ADP. The protein operates within carbohydrate degradation; glycolysis; pyruvate from D-glyceraldehyde 3-phosphate: step 2/5. The polypeptide is Phosphoglycerate kinase (pgk) (Pyrococcus furiosus (strain ATCC 43587 / DSM 3638 / JCM 8422 / Vc1)).